Here is a 313-residue protein sequence, read N- to C-terminus: S-methyl-5'-thioadenosine phosphorylase (313 aa).

Phosphate contacts are provided by residues Thr20, 68 to 69, and 101 to 102; these read RH and SA. Residue Met203 participates in substrate binding. A phosphate-binding site is contributed by Ser204. 227–229 contacts substrate; that stretch reads DYD.

This sequence belongs to the PNP/MTAP phosphorylase family. MTAP subfamily. In terms of assembly, homotrimer.

It localises to the cytoplasm. The protein resides in the nucleus. The enzyme catalyses S-methyl-5'-thioadenosine + phosphate = 5-(methylsulfanyl)-alpha-D-ribose 1-phosphate + adenine. It functions in the pathway amino-acid biosynthesis; L-methionine biosynthesis via salvage pathway; S-methyl-5-thio-alpha-D-ribose 1-phosphate from S-methyl-5'-thioadenosine (phosphorylase route): step 1/1. Its function is as follows. Catalyzes the reversible phosphorylation of S-methyl-5'-thioadenosine (MTA) to adenine and 5-methylthioribose-1-phosphate. Involved in the breakdown of MTA, a major by-product of polyamine biosynthesis. Responsible for the first step in the methionine salvage pathway after MTA has been generated from S-adenosylmethionine. Has broad substrate specificity with 6-aminopurine nucleosides as preferred substrates. The protein is S-methyl-5'-thioadenosine phosphorylase of Ajellomyces capsulatus (strain G186AR / H82 / ATCC MYA-2454 / RMSCC 2432) (Darling's disease fungus).